The chain runs to 59 residues: Large ribosomal subunit protein uL30 (59 aa).

Belongs to the universal ribosomal protein uL30 family. As to quaternary structure, part of the 50S ribosomal subunit.

The sequence is that of Large ribosomal subunit protein uL30 from Leptospira borgpetersenii serovar Hardjo-bovis (strain JB197).